The following is a 630-amino-acid chain: Protein mono-ADP-ribosyltransferase PARP6 (630 aa).

An ADP-ribosylcysteine modification is found at C237. In terms of domain architecture, PARP catalytic spans 394-620 (EMTQGSYLEI…QDPKIQKEIM (227 aa)). The residue at position 600 (D600) is an ADP-ribosyl aspartic acid.

It belongs to the ARTD/PARP family. In terms of processing, auto-mono-ADP-ribosylated.

The catalysed reaction is L-aspartyl-[protein] + NAD(+) = 4-O-(ADP-D-ribosyl)-L-aspartyl-[protein] + nicotinamide. The enzyme catalyses L-cysteinyl-[protein] + NAD(+) = S-(ADP-D-ribosyl)-L-cysteinyl-[protein] + nicotinamide + H(+). Mono-ADP-ribosyltransferase that mediates mono-ADP-ribosylation of target proteins. The sequence is that of Protein mono-ADP-ribosyltransferase PARP6 from Homo sapiens (Human).